The primary structure comprises 168 residues: Cytolysin secretion protein (168 aa).

This Vibrio vulnificus (strain CMCP6) protein is Cytolysin secretion protein (vvhB).